The following is a 263-amino-acid chain: Acyl-[acyl-carrier-protein]--UDP-N-acetylglucosamine O-acyltransferase (263 aa).

The protein belongs to the transferase hexapeptide repeat family. LpxA subfamily. In terms of assembly, homotrimer.

The protein localises to the cytoplasm. The enzyme catalyses a (3R)-hydroxyacyl-[ACP] + UDP-N-acetyl-alpha-D-glucosamine = a UDP-3-O-[(3R)-3-hydroxyacyl]-N-acetyl-alpha-D-glucosamine + holo-[ACP]. It participates in glycolipid biosynthesis; lipid IV(A) biosynthesis; lipid IV(A) from (3R)-3-hydroxytetradecanoyl-[acyl-carrier-protein] and UDP-N-acetyl-alpha-D-glucosamine: step 1/6. Involved in the biosynthesis of lipid A, a phosphorylated glycolipid that anchors the lipopolysaccharide to the outer membrane of the cell. The sequence is that of Acyl-[acyl-carrier-protein]--UDP-N-acetylglucosamine O-acyltransferase from Campylobacter jejuni subsp. doylei (strain ATCC BAA-1458 / RM4099 / 269.97).